The primary structure comprises 171 residues: MDKLRAKIRDIPDFPKPGILFRDITPLVKDPAALRLAIHQLVHPFVGEDITAVAGMEARGFIFGALAAWELGVGFVPLRKPGKLPYNVQSIDYDLEYGSARLEVHLDALGVGDRVLMVDDLLATGGTARASCSLVESLGAEVAACAFVIELDALEGREALHGRRVHSLLHY.

Belongs to the purine/pyrimidine phosphoribosyltransferase family. In terms of assembly, homodimer.

The protein resides in the cytoplasm. The enzyme catalyses AMP + diphosphate = 5-phospho-alpha-D-ribose 1-diphosphate + adenine. It participates in purine metabolism; AMP biosynthesis via salvage pathway; AMP from adenine: step 1/1. Catalyzes a salvage reaction resulting in the formation of AMP, that is energically less costly than de novo synthesis. In Methylococcus capsulatus (strain ATCC 33009 / NCIMB 11132 / Bath), this protein is Adenine phosphoribosyltransferase.